The following is a 106-amino-acid chain: Large ribosomal subunit protein uL24 (106 aa).

The protein belongs to the universal ribosomal protein uL24 family. In terms of assembly, part of the 50S ribosomal subunit.

Its function is as follows. One of two assembly initiator proteins, it binds directly to the 5'-end of the 23S rRNA, where it nucleates assembly of the 50S subunit. In terms of biological role, one of the proteins that surrounds the polypeptide exit tunnel on the outside of the subunit. This is Large ribosomal subunit protein uL24 from Acidithiobacillus ferrooxidans (strain ATCC 53993 / BNL-5-31) (Leptospirillum ferrooxidans (ATCC 53993)).